Reading from the N-terminus, the 426-residue chain is Serine--tRNA ligase (426 aa).

Residue threonine 233–glutamate 235 participates in L-serine binding. Arginine 264 to glutamate 266 contributes to the ATP binding site. Glutamate 287 is a binding site for L-serine. ATP is bound at residue glutamate 351 to serine 354. Serine 387 lines the L-serine pocket.

The protein belongs to the class-II aminoacyl-tRNA synthetase family. Type-1 seryl-tRNA synthetase subfamily. Homodimer. The tRNA molecule binds across the dimer.

Its subcellular location is the cytoplasm. The enzyme catalyses tRNA(Ser) + L-serine + ATP = L-seryl-tRNA(Ser) + AMP + diphosphate + H(+). It carries out the reaction tRNA(Sec) + L-serine + ATP = L-seryl-tRNA(Sec) + AMP + diphosphate + H(+). It functions in the pathway aminoacyl-tRNA biosynthesis; selenocysteinyl-tRNA(Sec) biosynthesis; L-seryl-tRNA(Sec) from L-serine and tRNA(Sec): step 1/1. In terms of biological role, catalyzes the attachment of serine to tRNA(Ser). Is also able to aminoacylate tRNA(Sec) with serine, to form the misacylated tRNA L-seryl-tRNA(Sec), which will be further converted into selenocysteinyl-tRNA(Sec). In Stutzerimonas stutzeri (strain A1501) (Pseudomonas stutzeri), this protein is Serine--tRNA ligase.